Consider the following 500-residue polypeptide: Protein dcd1B (500 aa).

The first 20 residues, 1–20 (MNLIKLFIICCLLISITVKS), serve as a signal peptide directing secretion. 6 N-linked (GlcNAc...) asparagine glycosylation sites follow: N284, N331, N441, N459, N474, and N475. Positions 464–500 (FSEQPPLPPPNNSSSSDSNSNSNSDSSSSSDSNSNSN) are disordered. Residues 475–500 (NSSSSDSNSNSNSDSSSSSDSNSNSN) are compositionally biased toward low complexity.

The protein localises to the secreted. This chain is Protein dcd1B (dcd1B), found in Dictyostelium discoideum (Social amoeba).